Here is a 177-residue protein sequence, read N- to C-terminus: B-phycoerythrin beta chain (177 aa).

(2R,3E)-phycoerythrobilin-binding positions include Lys-28, Asn-35, Asp-39, Cys-50, Asp-54, Cys-61, Asn-72, 77–78 (RR), Cys-82, Arg-129, 147–148 (SQ), 154–158 (PQGDC), and Cys-158. The residue at position 72 (Asn-72) is an N4-methylasparagine.

The protein belongs to the phycobiliprotein family. In terms of assembly, heterotetramer of 2 different alpha chains and 2 identical beta chains. The subunit composition could comprise any combination of 2 out of 4 different alpha units with an invariant beta unit. In terms of processing, contains three covalently linked phycoerythrobilin chromophores.

It is found in the plastid. Its subcellular location is the chloroplast thylakoid membrane. Light-harvesting photosynthetic tetrapyrrole chromophore-protein from the phycobiliprotein complex. The chain is B-phycoerythrin beta chain (cpeB) from Rhodomonas sp. (strain CS 24) (Chroomonas sp. (strain CS24)).